Here is a 592-residue protein sequence, read N- to C-terminus: Aspartate--tRNA(Asp/Asn) ligase (592 aa).

L-aspartate is bound at residue glutamate 173. Residues glutamine 197 to lysine 200 are aspartate. Arginine 219 is a binding site for L-aspartate. Residues arginine 219 to glutamate 221 and glutamine 228 contribute to the ATP site. Histidine 451 is a binding site for L-aspartate. Glutamate 486 serves as a coordination point for ATP. Arginine 493 lines the L-aspartate pocket. Glycine 538 to arginine 541 is an ATP binding site.

This sequence belongs to the class-II aminoacyl-tRNA synthetase family. Type 1 subfamily. Homodimer.

Its subcellular location is the cytoplasm. It catalyses the reaction tRNA(Asx) + L-aspartate + ATP = L-aspartyl-tRNA(Asx) + AMP + diphosphate. Aspartyl-tRNA synthetase with relaxed tRNA specificity since it is able to aspartylate not only its cognate tRNA(Asp) but also tRNA(Asn). Reaction proceeds in two steps: L-aspartate is first activated by ATP to form Asp-AMP and then transferred to the acceptor end of tRNA(Asp/Asn). The sequence is that of Aspartate--tRNA(Asp/Asn) ligase from Alkalilimnicola ehrlichii (strain ATCC BAA-1101 / DSM 17681 / MLHE-1).